The following is a 405-amino-acid chain: Syndecan-3 (405 aa).

Residues 1-22 (MPAELRRLAVLLLLLSARAALA) form the signal peptide. The Extracellular portion of the chain corresponds to 23–347 (QPWRNENYER…PQKNILERKE (325 aa)). The tract at residues 31–59 (ERPVDLEGSGDDDPFGDDELDDIYSGSGS) is disordered. Acidic residues predominate over residues 38–52 (GSGDDDPFGDDELDD). 5 O-linked (Xyl...) (glycosaminoglycan) serine glycosylation sites follow: Ser-39, Ser-55, Ser-57, Ser-59, and Ser-66. Disordered stretches follow at residues 134-159 (TTTA…ATTT) and 191-301 (TRAT…ELGN). A compositionally biased stretch (low complexity) spans 191-201 (TRATTLETPTT). The span at 202 to 237 (SIPETSVLTEVTTSRLVPSSTAKPRSLPKPSTSRTA) shows a compositional bias: polar residues. Residues Ser-280, Ser-283, and Ser-330 are each glycosylated (O-linked (Xyl...) (glycosaminoglycan) serine). A helical membrane pass occupies residues 348 to 372 (VLIAVIVGGVVGALFAAFLVMLLIY). Over 373–405 (RMKKKDEGSYTLEEPKQANVTYQKPDKQEEFYA) the chain is Cytoplasmic.

This sequence belongs to the syndecan proteoglycan family. O-glycosylated within the Thr/Ser-rich region which could interact with lectin domains on other molecules. Proximal chondrogenic central core of embryonic limb buds where cartilage differentiation is being initiated.

It is found in the membrane. In terms of biological role, cell surface proteoglycan that may bear both heparan sulfate and chondroitin sulfate. The multiple functional domains provide potential sites for mediating the adhesive cell-matrix interactions and cytoskeletal reorganization involved in limb chondrogenesis. Interaction with other matrix ligands as well as phosphorylation and shedding of the ectodomain might be involved in cell shape changes that occur during chondrogenesis. Furthermore, shedding of the ectodomain might break the adhesive interactions that promoted condensation, thus facilitating the deposition of cartilage matrix molecules. In Gallus gallus (Chicken), this protein is Syndecan-3 (SDC3).